Reading from the N-terminus, the 553-residue chain is Formate--tetrahydrofolate ligase (553 aa).

65-72 (TPAGEGKS) serves as a coordination point for ATP.

The protein belongs to the formate--tetrahydrofolate ligase family.

The enzyme catalyses (6S)-5,6,7,8-tetrahydrofolate + formate + ATP = (6R)-10-formyltetrahydrofolate + ADP + phosphate. It participates in one-carbon metabolism; tetrahydrofolate interconversion. The chain is Formate--tetrahydrofolate ligase from Brachyspira hyodysenteriae (strain ATCC 49526 / WA1).